The primary structure comprises 193 residues: Thymidine kinase (193 aa).

Residues 9-16 and 87-90 contribute to the ATP site; these read ASMNAGKS and DEAQ. Glu-88 serves as the catalytic Proton acceptor. The Zn(2+) site is built by Cys-145, Cys-147, Cys-182, and His-185.

The protein belongs to the thymidine kinase family. As to quaternary structure, homotetramer.

Its subcellular location is the cytoplasm. The enzyme catalyses thymidine + ATP = dTMP + ADP + H(+). This is Thymidine kinase from Zymomonas mobilis subsp. mobilis (strain ATCC 31821 / ZM4 / CP4).